Here is a 226-residue protein sequence, read N- to C-terminus: UPF0173 metal-dependent hydrolase GWCH70_2696 (226 aa).

It belongs to the UPF0173 family.

The protein is UPF0173 metal-dependent hydrolase GWCH70_2696 of Geobacillus sp. (strain WCH70).